Reading from the N-terminus, the 198-residue chain is 3-isopropylmalate dehydratase small subunit (198 aa).

This sequence belongs to the LeuD family. LeuD type 1 subfamily. Heterodimer of LeuC and LeuD.

It carries out the reaction (2R,3S)-3-isopropylmalate = (2S)-2-isopropylmalate. It participates in amino-acid biosynthesis; L-leucine biosynthesis; L-leucine from 3-methyl-2-oxobutanoate: step 2/4. In terms of biological role, catalyzes the isomerization between 2-isopropylmalate and 3-isopropylmalate, via the formation of 2-isopropylmaleate. This Mycobacterium avium (strain 104) protein is 3-isopropylmalate dehydratase small subunit.